The sequence spans 302 residues: Methionyl-tRNA formyltransferase (302 aa).

A (6S)-5,6,7,8-tetrahydrofolate-binding site is contributed by 108-111 (SLLP).

The protein belongs to the Fmt family.

The catalysed reaction is L-methionyl-tRNA(fMet) + (6R)-10-formyltetrahydrofolate = N-formyl-L-methionyl-tRNA(fMet) + (6S)-5,6,7,8-tetrahydrofolate + H(+). In terms of biological role, attaches a formyl group to the free amino group of methionyl-tRNA(fMet). The formyl group appears to play a dual role in the initiator identity of N-formylmethionyl-tRNA by promoting its recognition by IF2 and preventing the misappropriation of this tRNA by the elongation apparatus. The polypeptide is Methionyl-tRNA formyltransferase (Cereibacter sphaeroides (strain ATCC 17025 / ATH 2.4.3) (Rhodobacter sphaeroides)).